The chain runs to 472 residues: Cysteine--tRNA ligase (472 aa).

Cysteine 29 provides a ligand contact to Zn(2+). A 'HIGH' region motif is present at residues 31–41 (ITVYDYCHLGH). Residues cysteine 214, histidine 239, and glutamate 243 each contribute to the Zn(2+) site. Residues 271–275 (KMSKS) carry the 'KMSKS' region motif. ATP is bound at residue lysine 274.

The protein belongs to the class-I aminoacyl-tRNA synthetase family. Monomer. Requires Zn(2+) as cofactor.

The protein resides in the cytoplasm. It catalyses the reaction tRNA(Cys) + L-cysteine + ATP = L-cysteinyl-tRNA(Cys) + AMP + diphosphate. The polypeptide is Cysteine--tRNA ligase (Picosynechococcus sp. (strain ATCC 27264 / PCC 7002 / PR-6) (Agmenellum quadruplicatum)).